We begin with the raw amino-acid sequence, 142 residues long: MKTFTAKPETVKRDWYVVDASGKTLGRLATELARRLRGKHKAEYTPHVDTGDYIIVLNAEKVAVTGNKRLDKKYFHHTGHIGGIKEATFEEMIARHPERVIEIAVKGMLPKGPLGRAMFRKLKVYAGNEHNHAAQQPQVLDI.

Belongs to the universal ribosomal protein uL13 family. As to quaternary structure, part of the 50S ribosomal subunit.

Its function is as follows. This protein is one of the early assembly proteins of the 50S ribosomal subunit, although it is not seen to bind rRNA by itself. It is important during the early stages of 50S assembly. The chain is Large ribosomal subunit protein uL13 from Edwardsiella ictaluri (strain 93-146).